We begin with the raw amino-acid sequence, 62 residues long: Large ribosomal subunit protein uL30 (62 aa).

It belongs to the universal ribosomal protein uL30 family. As to quaternary structure, part of the 50S ribosomal subunit.

This Dinoroseobacter shibae (strain DSM 16493 / NCIMB 14021 / DFL 12) protein is Large ribosomal subunit protein uL30.